The following is a 510-amino-acid chain: Guanosine import ATP-binding protein NupO (510 aa).

ABC transporter domains follow at residues 5–240 and 257–501; these read IEML…VGRE and LAID…AGST. 37-44 provides a ligand contact to ATP; the sequence is GENGAGKS.

Belongs to the ABC transporter superfamily. The complex is composed of two ATP-binding proteins (NupO), two transmembrane proteins (NupP and NupQ) and a solute-binding protein (NupN).

It is found in the cell membrane. Part of an ABC transporter complex involved in the uptake of guanosine. Responsible for energy coupling to the transport system. May be a nucleoside transporter of broad specificity but with various affinities for different substrates. This is Guanosine import ATP-binding protein NupO from Bacillus subtilis (strain 168).